A 318-amino-acid chain; its full sequence is NADH-ubiquinone oxidoreductase chain 1 (318 aa).

8 helical membrane passes run 2-22, 69-89, 100-120, 146-166, 171-191, 231-251, 253-273, and 285-305; these read FMIN…FLTL, LLFT…WLPL, LGVL…LWSG, LAII…TNLI, HMWL…STLA, IMMM…TPLV, GIYT…FLWI, and LMHL…MWHV.

The protein belongs to the complex I subunit 1 family. Core subunit of respiratory chain NADH dehydrogenase (Complex I) which is composed of 45 different subunits.

It is found in the mitochondrion inner membrane. The catalysed reaction is a ubiquinone + NADH + 5 H(+)(in) = a ubiquinol + NAD(+) + 4 H(+)(out). Functionally, core subunit of the mitochondrial membrane respiratory chain NADH dehydrogenase (Complex I) which catalyzes electron transfer from NADH through the respiratory chain, using ubiquinone as an electron acceptor. Essential for the catalytic activity and assembly of complex I. The protein is NADH-ubiquinone oxidoreductase chain 1 (MT-ND1) of Myrmecophaga tridactyla (Giant anteater).